The sequence spans 116 residues: MNNIRAERVGEQMKQEIMDIVNNKVKDPRVGFLTITDVELTNDLSQAKVYLTVLGNDKEVDNTFKALHKATGFIKSELGSRMRLRIIPELTFEYDESIEYGNKIERMIQELHKNDK.

It belongs to the RbfA family. Monomer. Binds 30S ribosomal subunits, but not 50S ribosomal subunits or 70S ribosomes.

It localises to the cytoplasm. Its function is as follows. One of several proteins that assist in the late maturation steps of the functional core of the 30S ribosomal subunit. Associates with free 30S ribosomal subunits (but not with 30S subunits that are part of 70S ribosomes or polysomes). Required for efficient processing of 16S rRNA. May interact with the 5'-terminal helix region of 16S rRNA. This is Ribosome-binding factor A from Staphylococcus epidermidis (strain ATCC 35984 / DSM 28319 / BCRC 17069 / CCUG 31568 / BM 3577 / RP62A).